Here is a 410-residue protein sequence, read N- to C-terminus: Tryptophan synthase beta chain (410 aa).

Position 98 is an N6-(pyridoxal phosphate)lysine (Lys-98).

It belongs to the TrpB family. As to quaternary structure, tetramer of two alpha and two beta chains. Requires pyridoxal 5'-phosphate as cofactor.

It catalyses the reaction (1S,2R)-1-C-(indol-3-yl)glycerol 3-phosphate + L-serine = D-glyceraldehyde 3-phosphate + L-tryptophan + H2O. Its pathway is amino-acid biosynthesis; L-tryptophan biosynthesis; L-tryptophan from chorismate: step 5/5. Its function is as follows. The beta subunit is responsible for the synthesis of L-tryptophan from indole and L-serine. This Roseobacter denitrificans (strain ATCC 33942 / OCh 114) (Erythrobacter sp. (strain OCh 114)) protein is Tryptophan synthase beta chain.